The primary structure comprises 748 residues: Polyribonucleotide nucleotidyltransferase (748 aa).

Positions 487 and 493 each coordinate Mg(2+). The region spanning 554 to 613 (PSTTTIKIDKDKIRDIIGPGGKVIKEICETSGAKIDISDDGTVSVYASDRDKLKVALDKI) is the KH domain. Positions 623–691 (GEIFNGTVVK…NKGKAKLTIK (69 aa)) constitute an S1 motif domain. Residues 695 to 733 (KDKFSNNTKPKTSVNNTKDNSEPEQRHDSSKKRAWNEDN) form a disordered region. A compositionally biased stretch (polar residues) spans 699–712 (SNNTKPKTSVNNTK). A compositionally biased stretch (basic and acidic residues) spans 713–722 (DNSEPEQRHD).

Belongs to the polyribonucleotide nucleotidyltransferase family. It depends on Mg(2+) as a cofactor.

It localises to the cytoplasm. The enzyme catalyses RNA(n+1) + phosphate = RNA(n) + a ribonucleoside 5'-diphosphate. In terms of biological role, involved in mRNA degradation. Catalyzes the phosphorolysis of single-stranded polyribonucleotides processively in the 3'- to 5'-direction. This Rickettsia rickettsii (strain Iowa) protein is Polyribonucleotide nucleotidyltransferase.